Reading from the N-terminus, the 319-residue chain is Ornithine carbamoyltransferase (319 aa).

Carbamoyl phosphate contacts are provided by residues 57-60 (STRT), glutamine 84, arginine 108, and 135-138 (HPCQ). Residues asparagine 166, aspartate 230, and 234–235 (SM) each bind L-ornithine. Residues 270–271 (CL) and arginine 298 each bind carbamoyl phosphate.

Belongs to the aspartate/ornithine carbamoyltransferase superfamily. OTCase family.

The protein resides in the cytoplasm. The enzyme catalyses carbamoyl phosphate + L-ornithine = L-citrulline + phosphate + H(+). It functions in the pathway amino-acid biosynthesis; L-arginine biosynthesis; L-arginine from L-ornithine and carbamoyl phosphate: step 1/3. In terms of biological role, reversibly catalyzes the transfer of the carbamoyl group from carbamoyl phosphate (CP) to the N(epsilon) atom of ornithine (ORN) to produce L-citrulline. This Bacillus subtilis (strain 168) protein is Ornithine carbamoyltransferase (argF).